Reading from the N-terminus, the 189-residue chain is Hypoxanthine/guanine phosphoribosyltransferase (189 aa).

This sequence belongs to the purine/pyrimidine phosphoribosyltransferase family. Archaeal HPRT subfamily. As to quaternary structure, homodimer.

The protein resides in the cytoplasm. It carries out the reaction IMP + diphosphate = hypoxanthine + 5-phospho-alpha-D-ribose 1-diphosphate. The catalysed reaction is GMP + diphosphate = guanine + 5-phospho-alpha-D-ribose 1-diphosphate. Its pathway is purine metabolism; IMP biosynthesis via salvage pathway; IMP from hypoxanthine: step 1/1. In terms of biological role, catalyzes a salvage reaction resulting in the formation of IMP that is energically less costly than de novo synthesis. The sequence is that of Hypoxanthine/guanine phosphoribosyltransferase (hpt) from Methanosarcina acetivorans (strain ATCC 35395 / DSM 2834 / JCM 12185 / C2A).